Reading from the N-terminus, the 156-residue chain is Small ribosomal subunit protein uS7 (156 aa).

This sequence belongs to the universal ribosomal protein uS7 family. Part of the 30S ribosomal subunit. Contacts proteins S9 and S11.

Functionally, one of the primary rRNA binding proteins, it binds directly to 16S rRNA where it nucleates assembly of the head domain of the 30S subunit. Is located at the subunit interface close to the decoding center, probably blocks exit of the E-site tRNA. In Rhizorhabdus wittichii (strain DSM 6014 / CCUG 31198 / JCM 15750 / NBRC 105917 / EY 4224 / RW1) (Sphingomonas wittichii), this protein is Small ribosomal subunit protein uS7.